The chain runs to 456 residues: Phytase A (456 aa).

Residues 1–24 (MSSMASVLFAALAISGVQVTPSRG) form the signal peptide. Residues Gln-37, Tyr-38, Arg-68, His-69, Arg-72, Thr-75, and Arg-152 each coordinate 1D-myo-inositol hexakisphosphate. Intrachain disulfides connect Cys-58–Cys-396, Cys-197–Cys-450, Cys-246–Cys-264, and Cys-421–Cys-429. The active-site Nucleophile is the His-69. Lys-283 is a binding site for 1D-myo-inositol hexakisphosphate. The N-linked (GlcNAc...) asparagine glycan is linked to Asn-317. 1D-myo-inositol hexakisphosphate is bound by residues His-343 and Asp-344. Asn-358 carries N-linked (GlcNAc...) asparagine glycosylation.

Belongs to the histidine acid phosphatase family. In terms of assembly, monomer.

It is found in the secreted. The enzyme catalyses 1D-myo-inositol hexakisphosphate + H2O = 1D-myo-inositol 1,2,4,5,6-pentakisphosphate + phosphate. The catalysed reaction is 1D-myo-inositol 1,2,4,5,6-pentakisphosphate + H2O = 1D-myo-inositol 1,2,5,6-tetrakisphosphate + phosphate. It carries out the reaction 1D-myo-inositol 1,2,5,6-tetrakisphosphate + H2O = 1D-myo-inositol 1,2,6-trisphosphate + phosphate. It catalyses the reaction 1D-myo-inositol 1,2,6-trisphosphate + H2O = 1D-myo-inositol 1,2-bisphosphate + phosphate. The enzyme catalyses 1D-myo-inositol 1,2-bisphosphate + H2O = 1D-myo-inositol 2-phosphate + phosphate. Functionally, catalyzes the phosphate monoester hydrolysis of phytic acid (myo-inositol hexakisphosphate), which results in the stepwise formation of myo-inositol pentakis-, tetrakis-, tris-, bis-, and monophosphates, as well as the liberation of inorganic phosphate. Myo-inositol 2-monophosphate is the end product. The protein is Phytase A of Arthroderma benhamiae (strain ATCC MYA-4681 / CBS 112371) (Trichophyton mentagrophytes).